Reading from the N-terminus, the 1089-residue chain is Importin subunit beta-3 (1089 aa).

The residue at position 2 (Ser2) is an N-acetylserine. HEAT repeat units lie at residues 6–39 (EEVN…EEWI), 44–78 (IEYL…ALKA), 96–129 (KEVL…IAEC), 138–165 (PELL…ILTT), 175–207 (INSI…YFKQ), 216–252 (LGIL…LVEL), 260–295 (MFDQ…FSEN), 304–359 (QNYG…ALKL), 361–395 (GEYL…SSAA), 399–439 (ADVL…STDF), 441–481 (PFIQ…FSEF), 484–524 (KDIL…AEAA), 526–568 (NKFI…GFAV), 571–613 (EKFH…CRIL), 615–689 (DDFV…ATLL), 692–735 (QFAV…LLAA), 742–781 (ELVL…IKVM), 788–849 (EDQL…LKTT), 852–890 (HYLK…IQYG), 898–930 (KNAF…CAQY), 938–978 (VCIP…LYAY), 986–1017 (DTYT…QLIE), 1028–1063 (NISA…LLGF), and 1066–1089 (SSDA…KWFA). Thr830 is subject to Phosphothreonine.

The protein belongs to the importin beta family. Importin beta-3 subfamily. As to quaternary structure, interacts with Ran (GSP1); interacts specifically with the GTP-bound form of Ran (GTP-Ran), protecting it from GTP hydrolysis and nucleotide exchange. Interacts with RPL25; this interaction is dissociated by binding to Ran-GTP. Interacts with YAP1; this interaction is dissociated by binding to Ran-GTP. Interacts with NOP1; via its rg-NLS. Interacts with SOF1; via its cNLS. Interacts with histones H3 and H4; via their NLS. Interacts with ABF1.

Its subcellular location is the cytoplasm. The protein localises to the nucleus. Functions in nuclear protein import as nuclear transport receptor. Serves as receptor for classical and arginine/glycine-rich nuclear localization signals (cNLS and rg-NLS) in cargo substrates. Its predominant cargo substrate seems to be ribosomal proteins and ribosome biogenesis trans- and cis-acting factors. Required for nuclear transport of YAP1, NOP1 and SOF1. Mediates the nuclear import of histones H3 and H4. Mediates docking of the importin/substrate complex to the nuclear pore complex (NPC) through binding to repeat-containing nucleoporins. The complex is subsequently translocated through the pore by an energy requiring, Ran-dependent mechanism. At the nucleoplasmic side of the NPC, GTP-Ran binding leads to release of the cargo. The importin is re-exported from the nucleus to the cytoplasm where GTP hydrolysis releases Ran from importin. The directionality of nuclear import is thought to be conferred by an asymmetric distribution of the GTP- and GDP-bound forms of Ran between the cytoplasm and nucleus. In terms of biological role, plays a role in protein secretion. The sequence is that of Importin subunit beta-3 from Saccharomyces cerevisiae (strain ATCC 204508 / S288c) (Baker's yeast).